The primary structure comprises 471 residues: Galactolipase DONGLE, chloroplastic (471 aa).

A chloroplast-targeting transit peptide spans 1–88; sequence MAAKVFTQNP…PLSRVWREIQ (88 aa). The disordered stretch occupies residues 44–71; the sequence is SSSTMSPPISSSPLSLPSSSSSQAIPPS. A GXSXG motif is present at residues 284–288; sequence GHSMG. Residue Ser-286 is the Acyl-ester intermediate of the active site. Residues Asp-349 and His-400 each act as charge relay system in the active site.

The protein belongs to the AB hydrolase superfamily. Lipase family. Expressed in leaves and seedlings. Not detected in flowers, siliques or roots.

The protein localises to the plastid. It localises to the chloroplast. It catalyses the reaction a 1,2-diacyl-3-O-(beta-D-galactosyl)-sn-glycerol + 2 H2O = 3-beta-D-galactosyl-sn-glycerol + 2 a fatty acid + 2 H(+). The catalysed reaction is a 1,2-diacyl-sn-glycero-3-phosphocholine + H2O = a 2-acyl-sn-glycero-3-phosphocholine + a fatty acid + H(+). The enzyme catalyses a 1,2-diacyl-3-O-[alpha-D-galactosyl-(1-&gt;6)-beta-D-galactosyl]-sn-glycerol + H2O = acyl-3-O-[alpha-D-galactosyl-(1-&gt;6)-beta-D-galactosyl]-sn-glycerol + a fatty acid + H(+). In terms of biological role, sn-1-specific phospholipase that releases free fatty acids from phosphatidylcholine. Has a higher galactolipase activity than phospholipase A1 activity when digalactosyldiacylglycerol (DGDG) is used as substrate. Catalyzes the initial step of jasmonic acid biosynthesis. Required for the biosynthesis of basal-level endogenous jasmonate in vegetative tissues. Regulates leaves growth. Not essential for jasmonate biosynthesis after wounding or upon pathogen infection. The chain is Galactolipase DONGLE, chloroplastic from Arabidopsis thaliana (Mouse-ear cress).